The chain runs to 708 residues: Large T antigen (708 aa).

Methionine 1 carries the post-translational modification N-acetylmethionine; by host. The region spanning glutamine 12–glycine 75 is the J domain. Residues glutamate 63–aspartate 89 are binding of LT to the CUL7 complex. Residues leucine 103–glutamate 107 carry the LXCXE motif motif. Serine 106, serine 112, serine 120, and serine 123 each carry phosphoserine; by host. The tract at residues methionine 109 to aspartate 134 is disordered. Position 124 is a phosphothreonine; by host (threonine 124). The Nuclear localization signal motif lies at proline 125–valine 132. The T-ag OBD DNA-binding region spans proline 139–glutamate 254. The segment at threonine 265–arginine 357 adopts a T-ag D1-type zinc-finger fold. Zn(2+)-binding residues include cysteine 302, cysteine 305, histidine 313, and histidine 317. Residues cysteine 337–glutamine 672 form a binding to host TP53 protein region. Positions lysine 400–serine 560 constitute an SF3 helicase domain. Positions lysine 418–lysine 616 are ATPase activity. Residue glycine 426–threonine 433 participates in ATP binding. The interval aspartate 627–threonine 708 is C-terminal region. Residues arginine 630–glutamine 685 are disordered. Serine 639 carries the post-translational modification Phosphoserine; by host. Positions asparagine 642 to glycine 662 are enriched in basic and acidic residues. Residues isoleucine 663–serine 679 show a composition bias toward polar residues. Phosphoserine; by host occurs at positions 676, 677, and 679. Lysine 697 carries the post-translational modification N6-acetyllysine; by host. The interval proline 699 to threonine 708 is CPD. Threonine 701 is modified (phosphothreonine; by host).

Isoform large T antigen forms homohexamers in the presence of ATP. Interacts with host HDAC1. Interacts (via LXCXE domain) with host RB1; the interaction induces the aberrant dissociation of RB1-E2F1 complex thereby disrupting RB1's activity. Interacts (via LXCXE domain) with host pRB-related proteins RBL1 and RBL2. Interacts (via C-terminus) with host TOP1 and POLA1 allowing DNA replication. Interacts with host TP53, inhibiting TP53 binding to DNA. Interacts with host preinitiation complex components TBP, TFIIA and TFIID to regulate transcription initiation. LT interacts (via CPD region) with host FBW7gamma isoform (via WD repeats); seems to function as a competitive inhibitor of FBW7gamma function for physiologic substrates. LT interacts with host E3 ubiquitin ligase CUL7; this interaction seems to inhibit CUL7. Component of a SCF(CUL7)-like complex composed of SV40 Lt and host proteins CUL7, SKP1, RBX1, and FBXW8. LT interacts with host BUB1; this interaction induces activation of a DNA damage response and promotes p53 stabilization and phosphorylation. Interacts with host FAM111A and this interaction is required for efficient viral replication and sustained viral gene expression in restrictive cell types. The cofactor is Mg(2+). In terms of processing, phosphorylated on both serine and threonine residues. Phosphorylation on Ser-120 and Ser-123 inhibits viral replication, while phosphorylation on Thr-124 enhances replication by activating the DNA-binding domain. Phosphorylation on Thr-701 is required for binding to host FBW7gamma isoform. Dephosphorylated preferentially by PP2A on Ser-120, Ser-123, Ser-677 and perhaps Ser-679. Small t antigen inhibits the dephosphorylation by the AC form of PP2A. O-Glycosylated near the C-terminal region. Post-translationally, acetylated by CBP in a TP53-dependent manner.

Its subcellular location is the host nucleus. The catalysed reaction is Couples ATP hydrolysis with the unwinding of duplex DNA by translocating in the 3'-5' direction.. The enzyme catalyses ATP + H2O = ADP + phosphate + H(+). Its activity is regulated as follows. DNA helicase activity is inhibited by ATP-gamma-S. Its function is as follows. Isoform large T antigen is a key early protein essential for both driving viral replication and inducing cellular transformation. Plays a role in viral genome replication by driving entry of quiescent cells into the cell cycle and by autoregulating the synthesis of viral early mRNA. Displays highly oncogenic activities by corrupting the host cellular checkpoint mechanisms that guard cell division and the transcription, replication, and repair of DNA. Participates in the modulation of cellular gene expression preceeding viral DNA replication. This step involves binding to host key cell cycle regulators retinoblastoma protein RB1/pRb and TP53. Induces the disassembly of host E2F1 transcription factors from RB1, thus promoting transcriptional activation of E2F1-regulated S-phase genes. Inhibits host TP53 binding to DNA, abrogating the ability of TP53 to stimulate gene expression. Plays the role of a TFIID-associated factor (TAF) in transcription initiation for all three RNA polymerases, by stabilizing the TBP-TFIIA complex on promoters. Initiates viral DNA replication and unwinding via interactions with the viral origin of replication. Binds two adjacent sites in the SV40 origin. The replication fork movement is facilitated by Large T antigen helicase activity. Has processive 3'-5' DNA helicase activity which requires a short 3' single-stranded region and ATP; other (d)NTPs can partially replace ATP. Activates the transcription of viral late mRNA, through host TBP and TFIIA stabilization. Interferes with histone deacetylation mediated by HDAC1, leading to activation of transcription. May inactivate the growth-suppressing properties of the E3 ubiquitin ligase CUL7. Isoform 17kT antigen targets host RBL2 for degradation and promotes cell proliferation. Transactivates host cyclin A promoter through its J domain. Functionally, unwinds G4 DNA (planar arrays of 4 guanine bases stabilized by hydrogen bonds, parallel and antiparallel arrays were tested); unwinding occurs in the 3'-5' direction, requires a 3' single-stranded end and hydrolyzable ATP. In Macaca (macaques), this protein is Large T antigen.